We begin with the raw amino-acid sequence, 170 residues long: CCHC-type zinc finger nucleic acid binding protein (170 aa).

S2 carries the N-acetylserine modification. The CCHC-type 1 zinc-finger motif lies at 4–21 (NECFKCGRSGHWARECPT). Position 8 is an N6-acetyllysine (K8). Omega-N-methylarginine; by PRMT1 occurs at positions 25 and 27. The tract at residues 25-33 (RGRGMRSRG) is RNA-binding Arg/Gly-rich region (RGG-box). At S42 the chain carries Phosphoserine. 6 consecutive CCHC-type zinc fingers follow at residues 45–62 (DICYRCGESGHLAKDCDL), 65–82 (DACYNCGRGGHIAKDCKE), 89–106 (QCCYNCGKPGHLARDCDH), 110–127 (QKCYSCGEFGHIQKDCTK), 128–145 (VKCYRCGETGHVAINCSK), and 149–166 (VNCYRCGESGHLARECTI). The residue at position 72 (R72) is an Omega-N-methylarginine.

Associates with the 40S ribosomal subunit, the 80S ribosome and with polysomes. Post-translationally, arginine methylation by PRMT1 in the Arg/Gly-rich region impedes RNA binding.

The protein resides in the nucleus. The protein localises to the cytoplasm. It localises to the endoplasmic reticulum. In terms of biological role, single-stranded DNA-binding protein that preferentially binds to the sterol regulatory element (SRE) sequence 5'-GTGCGGTG-3', and thereby mediates transcriptional repression. Has a role as transactivator of the Myc promoter. Binds single-stranded RNA in a sequence-specific manner. Binds G-rich elements in target mRNA coding sequences. Prevents G-quadruplex structure formation in vitro, suggesting a role in supporting translation by resolving stable structures on mRNAs. This Bos taurus (Bovine) protein is CCHC-type zinc finger nucleic acid binding protein (CNBP).